Here is a 917-residue protein sequence, read N- to C-terminus: Probable dipeptidyl-aminopeptidase B (917 aa).

Residues 1–16 (MATEKGHGRDDEERVP) show a composition bias toward basic and acidic residues. A disordered region spans residues 1–21 (MATEKGHGRDDEERVPLTRGS). At 1–99 (MATEKGHGRD…KPMHKSVKIA (99 aa)) the chain is on the cytoplasmic side. Residues 100-120 (LWTLLFLSLGGWSLAFVLFIF) form a helical; Signal-anchor for type II membrane protein membrane-spanning segment. Residues 121–917 (RSHDTYETPI…RAATWAGLSI (797 aa)) are Vacuolar-facing. Residues Asn-135, Asn-351, and Asn-574 are each glycosylated (N-linked (GlcNAc...) asparagine). Catalysis depends on Ser-756, which acts as the Charge relay system. Asn-815 carries N-linked (GlcNAc...) asparagine glycosylation. Active-site charge relay system residues include Asp-833 and His-866. The N-linked (GlcNAc...) asparagine glycan is linked to Asn-902.

This sequence belongs to the peptidase S9B family.

It is found in the vacuole membrane. It carries out the reaction Release of an N-terminal dipeptide, Xaa-Yaa-|-Zaa-, from a polypeptide, preferentially when Yaa is Pro, provided Zaa is neither Pro nor hydroxyproline.. In terms of biological role, type IV dipeptidyl-peptidase which removes N-terminal dipeptides sequentially from polypeptides having unsubstituted N-termini provided that the penultimate residue is proline. This Ajellomyces capsulatus (strain H88) (Darling's disease fungus) protein is Probable dipeptidyl-aminopeptidase B (DAPB).